We begin with the raw amino-acid sequence, 455 residues long: Phosphoglycerate kinase, glycosomal (455 aa).

(2R)-3-phosphoglycerate-binding residues include Val23, Asp24, Phe25, Asn26, Arg39, Ser61, His62, Gly64, Arg65, Arg132, His168, and Arg169. Gly214 and Ala215 together coordinate ADP. Residue Gly214 participates in CDP binding. AMP is bound by residues Ala215 and Lys216. Residue Ala215 participates in ATP binding. Ala215 lines the Mg(2+) pocket. Residue Lys216 coordinates (2R)-3-phosphoglycerate. A CDP-binding site is contributed by Asp219. Asp219 contacts Mg(2+). ADP-binding residues include Lys220 and Gly238. Lys220 contacts AMP. Lys220 contributes to the ATP binding site. Position 238 (Gly238) interacts with CDP. AMP contacts are provided by Ala239 and Ala311. The ATP site is built by Ala239 and Ala311. ADP is bound by residues Ala311 and Asn335. Residues Gly336 and Phe341 each coordinate CDP. Residues Phe341, Glu342, Asp374, and Thr375 each contribute to the ADP site. Residue Glu342 coordinates AMP. The ATP site is built by Glu342, Asp374, and Thr375. Asp374 is a binding site for Mg(2+). Residues 417 to 455 (DAKAPAAAAAAGGDCPCGSGCAAVPAAATATVSMVLASP) form a topogenic signal region.

It belongs to the phosphoglycerate kinase family. In terms of assembly, monomer. Mg(2+) is required as a cofactor.

The protein resides in the glycosome. It carries out the reaction (2R)-3-phosphoglycerate + ATP = (2R)-3-phospho-glyceroyl phosphate + ADP. It functions in the pathway carbohydrate degradation; glycolysis; pyruvate from D-glyceraldehyde 3-phosphate: step 2/5. This Crithidia fasciculata protein is Phosphoglycerate kinase, glycosomal (PGKC).